Here is a 287-residue protein sequence, read N- to C-terminus: Glycine--tRNA ligase alpha subunit (287 aa).

Belongs to the class-II aminoacyl-tRNA synthetase family. Tetramer of two alpha and two beta subunits.

It is found in the cytoplasm. The enzyme catalyses tRNA(Gly) + glycine + ATP = glycyl-tRNA(Gly) + AMP + diphosphate. This chain is Glycine--tRNA ligase alpha subunit, found in Petrotoga mobilis (strain DSM 10674 / SJ95).